A 281-amino-acid chain; its full sequence is Digeranylgeranylglyceryl phosphate synthase (281 aa).

Helical transmembrane passes span 7 to 27 (ILRPVNAVMAVITVMLMALIT), 32 to 52 (FSVLLASVVVFTATGAGNVIN), 72 to 91 (GRISRGVAGVYSIILFALAS), 95 to 117 (FYLGLLPGLVVVSSSLLMVYYAW), 128 to 148 (ITISFLTGLSFVFGGIVLGEV), 193 to 213 (ISGVLAASFMLIASLTSPSLY), 214 to 234 (LLGIFSALYIPVLLLAVAVFL), and 258 to 278 (VGMALTFIAFAAGSGTITALT).

Belongs to the UbiA prenyltransferase family. DGGGP synthase subfamily. Requires Mg(2+) as cofactor.

The protein resides in the cell membrane. It carries out the reaction sn-3-O-(geranylgeranyl)glycerol 1-phosphate + (2E,6E,10E)-geranylgeranyl diphosphate = 2,3-bis-O-(geranylgeranyl)-sn-glycerol 1-phosphate + diphosphate. It participates in membrane lipid metabolism; glycerophospholipid metabolism. Functionally, prenyltransferase that catalyzes the transfer of the geranylgeranyl moiety of geranylgeranyl diphosphate (GGPP) to the C2 hydroxyl of (S)-3-O-geranylgeranylglyceryl phosphate (GGGP). This reaction is the second ether-bond-formation step in the biosynthesis of archaeal membrane lipids. This chain is Digeranylgeranylglyceryl phosphate synthase, found in Methanothermobacter thermautotrophicus (strain ATCC 29096 / DSM 1053 / JCM 10044 / NBRC 100330 / Delta H) (Methanobacterium thermoautotrophicum).